A 476-amino-acid polypeptide reads, in one-letter code: Ribulose bisphosphate carboxylase large chain (476 aa).

Residues asparagine 124 and threonine 174 each contribute to the substrate site. The active-site Proton acceptor is the lysine 176. Lysine 178 lines the substrate pocket. 3 residues coordinate Mg(2+): lysine 202, aspartate 204, and glutamate 205. Lysine 202 is subject to N6-carboxylysine. The active-site Proton acceptor is histidine 295. Residues arginine 296, histidine 328, and serine 380 each coordinate substrate.

The protein belongs to the RuBisCO large chain family. Type I subfamily. As to quaternary structure, heterohexadecamer of 8 large chains and 8 small chains; disulfide-linked. The disulfide link is formed within the large subunit homodimers. The cofactor is Mg(2+). In terms of processing, the disulfide bond which can form in the large chain dimeric partners within the hexadecamer appears to be associated with oxidative stress and protein turnover.

The protein localises to the carboxysome. The enzyme catalyses 2 (2R)-3-phosphoglycerate + 2 H(+) = D-ribulose 1,5-bisphosphate + CO2 + H2O. The catalysed reaction is D-ribulose 1,5-bisphosphate + O2 = 2-phosphoglycolate + (2R)-3-phosphoglycerate + 2 H(+). Its function is as follows. RuBisCO catalyzes two reactions: the carboxylation of D-ribulose 1,5-bisphosphate, the primary event in carbon dioxide fixation, as well as the oxidative fragmentation of the pentose substrate in the photorespiration process. Both reactions occur simultaneously and in competition at the same active site. The polypeptide is Ribulose bisphosphate carboxylase large chain (Cyanothece sp. (strain PCC 7425 / ATCC 29141)).